The sequence spans 161 residues: Methylated-DNA--protein-cysteine methyltransferase (161 aa).

Residue Cys128 is the Nucleophile; methyl group acceptor of the active site.

This sequence belongs to the MGMT family.

It localises to the cytoplasm. It catalyses the reaction a 6-O-methyl-2'-deoxyguanosine in DNA + L-cysteinyl-[protein] = S-methyl-L-cysteinyl-[protein] + a 2'-deoxyguanosine in DNA. It carries out the reaction a 4-O-methyl-thymidine in DNA + L-cysteinyl-[protein] = a thymidine in DNA + S-methyl-L-cysteinyl-[protein]. Involved in the cellular defense against the biological effects of O6-methylguanine (O6-MeG) and O4-methylthymine (O4-MeT) in DNA. Repairs the methylated nucleobase in DNA by stoichiometrically transferring the methyl group to a cysteine residue in the enzyme. This is a suicide reaction: the enzyme is irreversibly inactivated. The sequence is that of Methylated-DNA--protein-cysteine methyltransferase from Methanocaldococcus vulcanius (strain ATCC 700851 / DSM 12094 / M7) (Methanococcus vulcanius).